A 579-amino-acid chain; its full sequence is Proline--tRNA ligase (579 aa).

The protein belongs to the class-II aminoacyl-tRNA synthetase family. ProS type 1 subfamily. As to quaternary structure, homodimer.

Its subcellular location is the cytoplasm. It carries out the reaction tRNA(Pro) + L-proline + ATP = L-prolyl-tRNA(Pro) + AMP + diphosphate. Catalyzes the attachment of proline to tRNA(Pro) in a two-step reaction: proline is first activated by ATP to form Pro-AMP and then transferred to the acceptor end of tRNA(Pro). As ProRS can inadvertently accommodate and process non-cognate amino acids such as alanine and cysteine, to avoid such errors it has two additional distinct editing activities against alanine. One activity is designated as 'pretransfer' editing and involves the tRNA(Pro)-independent hydrolysis of activated Ala-AMP. The other activity is designated 'posttransfer' editing and involves deacylation of mischarged Ala-tRNA(Pro). The misacylated Cys-tRNA(Pro) is not edited by ProRS. This is Proline--tRNA ligase from Chlamydia muridarum (strain MoPn / Nigg).